A 337-amino-acid chain; its full sequence is MSRINLLLLCGGGSAEHDISLMSANYFESSLAKSDQFSVLRVELDKLGQYRTAAGDDCELTNNREIRFRDETKAPWPVDYVIPCIHGYPGETGDIQSYFNLIQLPYFGCESEASSNCFNKITAKMWFSALGIPNTPYIFLHQYDDEAISQAQTALANWGSIFIKAASQGSSVGCYKVDDSSKVAQVLKDAFGYAPYVVVEKTIKARELEVAVYEYNGEIVATLPGEIICDTNTFYTFDEKYAKSSKARTDVVAKDVSVELSEQIRAYAIKAFKGMKLRHLSRIDFFLTAENEILLNEINTFPGSTPISMFPKMLQNHGHDFTEYLSLVINSQLSAKD.

One can recognise an ATP-grasp domain in the interval Lys-124–Asn-330. Ala-154–Glu-209 provides a ligand contact to ATP. Mg(2+) contacts are provided by Asp-284, Glu-297, and Asn-299.

This sequence belongs to the D-alanine--D-alanine ligase family. It depends on Mg(2+) as a cofactor. Requires Mn(2+) as cofactor.

The protein resides in the cytoplasm. It catalyses the reaction 2 D-alanine + ATP = D-alanyl-D-alanine + ADP + phosphate + H(+). It functions in the pathway cell wall biogenesis; peptidoglycan biosynthesis. Its function is as follows. Cell wall formation. The sequence is that of D-alanine--D-alanine ligase from Shewanella putrefaciens (strain CN-32 / ATCC BAA-453).